The chain runs to 94 residues: ATP synthase F(0) complex subunit f, mitochondrial (94 aa).

Ala2 carries the post-translational modification N-acetylalanine. The residue at position 3 (Ser3) is a Phosphoserine. Lys22 carries the N6-acetyllysine modification. A helical transmembrane segment spans residues 68–85 (MVLACYVLFSYSFSYKHL).

It belongs to the ATPase F chain family. As to quaternary structure, component of the ATP synthase complex composed at least of ATP5F1A/subunit alpha, ATP5F1B/subunit beta, ATP5MC1/subunit c (homooctomer), MT-ATP6/subunit a, MT-ATP8/subunit 8, ATP5ME/subunit e, ATP5MF/subunit f, ATP5MG/subunit g, ATP5MK/subunit k, ATP5MJ/subunit j, ATP5F1C/subunit gamma, ATP5F1D/subunit delta, ATP5F1E/subunit epsilon, ATP5PF/subunit F6, ATP5PB/subunit b, ATP5PD/subunit d, ATP5PO/subunit OSCP. ATP synthase complex consists of a soluble F(1) head domain (subunits alpha(3) and beta(3)) - the catalytic core - and a membrane F(0) domain - the membrane proton channel (subunits c, a, 8, e, f, g, k and j). These two domains are linked by a central stalk (subunits gamma, delta, and epsilon) rotating inside the F1 region and a stationary peripheral stalk (subunits F6, b, d, and OSCP).

It localises to the mitochondrion. The protein resides in the mitochondrion inner membrane. Subunit f, of the mitochondrial membrane ATP synthase complex (F(1)F(0) ATP synthase or Complex V) that produces ATP from ADP in the presence of a proton gradient across the membrane which is generated by electron transport complexes of the respiratory chain. ATP synthase complex consist of a soluble F(1) head domain - the catalytic core - and a membrane F(1) domain - the membrane proton channel. These two domains are linked by a central stalk rotating inside the F(1) region and a stationary peripheral stalk. During catalysis, ATP synthesis in the catalytic domain of F(1) is coupled via a rotary mechanism of the central stalk subunits to proton translocation. In vivo, can only synthesize ATP although its ATP hydrolase activity can be activated artificially in vitro. Part of the complex F(0) domain. The polypeptide is ATP synthase F(0) complex subunit f, mitochondrial (Pongo abelii (Sumatran orangutan)).